Consider the following 278-residue polypeptide: Undecaprenyl-diphosphatase 1 (278 aa).

The next 7 membrane-spanning stretches (helical) occupy residues 1-21 (MFFG…TEFL), 43-63 (AFTT…VVLL), 83-103 (IWAT…IGFL), 112-132 (LMNW…FIFI), 192-212 (FSFF…IGSY), 224-244 (IVIL…VIKW), and 257-277 (FGWY…IGII).

Belongs to the UppP family.

It is found in the cell membrane. The enzyme catalyses di-trans,octa-cis-undecaprenyl diphosphate + H2O = di-trans,octa-cis-undecaprenyl phosphate + phosphate + H(+). In terms of biological role, catalyzes the dephosphorylation of undecaprenyl diphosphate (UPP). Confers resistance to bacitracin. The sequence is that of Undecaprenyl-diphosphatase 1 from Oenococcus oeni (strain ATCC BAA-331 / PSU-1).